The primary structure comprises 438 residues: Transcriptional regulator Mb0495 (438 aa).

Residues 1–12 show a composition bias toward polar residues; that stretch reads MYSTNRTSQSLS. Residues 1–22 are disordered; that stretch reads MYSTNRTSQSLSRKPGRKHQLR. The segment at residues 52 to 73 is a DNA-binding region (H-T-H motif); that stretch reads VGRDVIAGSTSLSIATVNRQVI.

The protein belongs to the ROK (NagC/XylR) family.

Functionally, positively regulates the expression of PE13 and PPE18. This Mycobacterium bovis (strain ATCC BAA-935 / AF2122/97) protein is Transcriptional regulator Mb0495.